The chain runs to 143 residues: Peptide methionine sulfoxide reductase MsrB (143 aa).

A MsrB domain is found at 16 to 139 (DAELRRRLTP…NSAALNFESR (124 aa)). The Zn(2+) site is built by C55, C58, C104, and C107. C128 acts as the Nucleophile in catalysis.

This sequence belongs to the MsrB Met sulfoxide reductase family. Requires Zn(2+) as cofactor.

It catalyses the reaction L-methionyl-[protein] + [thioredoxin]-disulfide + H2O = L-methionyl-(R)-S-oxide-[protein] + [thioredoxin]-dithiol. This is Peptide methionine sulfoxide reductase MsrB from Burkholderia lata (strain ATCC 17760 / DSM 23089 / LMG 22485 / NCIMB 9086 / R18194 / 383).